The sequence spans 1705 residues: Protein TIC 214 (1705 aa).

5 helical membrane-spanning segments follow: residues 18 to 38, 67 to 87, 127 to 147, 175 to 195, and 218 to 238; these read IINS…FSIG, FITG…HLAL, LSIQ…HFIL, VGWI…LVWI, and SMSM…HYLG.

Belongs to the TIC214 family. In terms of assembly, part of the Tic complex.

Its subcellular location is the plastid. The protein resides in the chloroplast inner membrane. Its function is as follows. Involved in protein precursor import into chloroplasts. May be part of an intermediate translocation complex acting as a protein-conducting channel at the inner envelope. This Helianthus annuus (Common sunflower) protein is Protein TIC 214.